The sequence spans 75 residues: Toxin-like peptide AaF1CA7 (75 aa).

Residues M1–G22 form the signal peptide. Positions V25–R75 constitute an LCN-type CS-alpha/beta domain. Cystine bridges form between C40–C63, C49–C68, and C53–C70.

This sequence belongs to the long (3 C-C) scorpion toxin superfamily. As to expression, expressed by the venom gland.

It localises to the secreted. Functionally, probable neurotoxin that inhibits ion channels. The protein is Toxin-like peptide AaF1CA7 of Androctonus australis (Sahara scorpion).